A 296-amino-acid polypeptide reads, in one-letter code: Glycine--tRNA ligase alpha subunit (296 aa).

This sequence belongs to the class-II aminoacyl-tRNA synthetase family. As to quaternary structure, tetramer of two alpha and two beta subunits.

The protein resides in the cytoplasm. It carries out the reaction tRNA(Gly) + glycine + ATP = glycyl-tRNA(Gly) + AMP + diphosphate. This is Glycine--tRNA ligase alpha subunit from Maricaulis maris (strain MCS10) (Caulobacter maris).